We begin with the raw amino-acid sequence, 316 residues long: MAAAVAVAGPSMEVEQDLPGFRFHPTEEELLDFYLSRVVLGKKLHFNIIGTLNIYRHDPWDLPGMAKIGEREWYFFVPRDRKAGNGGRPNRTTERGFWKATGSDRAIRSSGDPKRVIGLKKTLVFYQGRAPRGTKTDWVMNEYRLPDYGAARAAAPPPKEDMVLCKIYRKATPLKELEQRASAMEEMQRGSSHGDYTATRASLVHDASASTGDDYFSSDDVHDSGFLIQSSSSSAAPSGSSSKNGGAGAPREAKKEEADVTVTVASATSLQLPAVSQLPSLQLPAMDWLQDPFLTQLRSPWQDQHCLSPYAHLLYY.

The 154-residue stretch at 17-170 (DLPGFRFHPT…DMVLCKIYRK (154 aa)) folds into the NAC domain. Residues 117 to 176 (IGLKKTLVFYQGRAPRGTKTDWVMNEYRLPDYGAARAAAPPPKEDMVLCKIYRKATPLKE) mediate DNA binding. The disordered stretch occupies residues 229-260 (QSSSSSAAPSGSSSKNGGAGAPREAKKEEADV). The segment covering 230 to 244 (SSSSSAAPSGSSSKN) has biased composition (low complexity).

It is found in the nucleus. In terms of biological role, transcription activator that binds sequence-specific DNA motifs. Involved in stress response. Plays a positive role in drought and salt stress tolerance through the modulation of abscisic acid-mediated signaling. The polypeptide is NAC domain-containing protein 22 (Oryza sativa subsp. japonica (Rice)).